Here is a 281-residue protein sequence, read N- to C-terminus: Phytanoyl-CoA dioxygenase 1 (281 aa).

2-oxoglutarate contacts are provided by residues Lys-98, Met-137, 152–154 (HQD), and Trp-169. Residues His-152 and Asp-154 each contribute to the Fe cation site. Fe cation is bound at residue His-237. Ser-239 and Arg-248 together coordinate 2-oxoglutarate.

The protein belongs to the PhyH family. The cofactor is Fe cation. Requires L-ascorbate as cofactor.

It carries out the reaction phytanoyl-CoA + 2-oxoglutarate + O2 = 2-hydroxyphytanoyl-CoA + succinate + CO2. It participates in lipid metabolism; fatty acid metabolism. Converts phytanoyl-CoA to 2-hydroxyphytanoyl-CoA. This Oryza sativa subsp. japonica (Rice) protein is Phytanoyl-CoA dioxygenase 1.